Reading from the N-terminus, the 612-residue chain is Proton channel OTOP1 (612 aa).

A compositionally biased stretch (low complexity) spans 1–46 (MLEGLGSPASPRAAASASVAGSSGPAACSPPSSSAPRSPESPAPRR). The tract at residues 1-50 (MLEGLGSPASPRAAASASVAGSSGPAACSPPSSSAPRSPESPAPRRGGVR) is disordered. Topologically, residues 1–58 (MLEGLGSPASPRAAASASVAGSSGPAACSPPSSSAPRSPESPAPRRGGVRASVPQKLA) are cytoplasmic. A helical membrane pass occupies residues 59-80 (EMLSSQYGLIVFVAGLLLLLAW). Residues 81-88 (AVHAAGVS) are Extracellular-facing. Residues 89–112 (KSDLLCFLTALMLLQLLWMLWYVG) form a helical membrane-spanning segment. Topologically, residues 113–130 (RSSAHRRLFRLKDTHAGA) are cytoplasmic. Residues 131-153 (GWLRGSITLFAVITVILGCLKIG) traverse the membrane as a helical segment. At 154 to 163 (YFIGFSECLS) the chain is on the extracellular side. A helical transmembrane segment spans residues 164–188 (ATEGVFPVTHSVHTLLQVYFLWGHA). Topologically, residues 189–196 (KDIIQSFK) are cytoplasmic. The helical transmembrane segment at 197-223 (TLERFGVIHSVFTNLLLWANGVLNESK) threads the bilayer. Over 224–264 (HQLNEHKERLITLGFGNITTVLDDHTPQCNCTPPTLCTAIS) the chain is Extracellular. The helical transmembrane segment at 265–290 (HGIYYLYPFNIEYQILASTMLYVLWK) threads the bilayer. The Cytoplasmic portion of the chain corresponds to 291–311 (NIGRKVDSHQHQKMQFKSDGV). Residues 312–334 (MVGAVLGLTVLAATIAVVVVYLI) traverse the membrane as a helical segment. Residues 335–344 (HIGRSKTKSE) are Extracellular-facing. A helical transmembrane segment spans residues 345 to 370 (SALIMFYLYAITLLMLMGAAGLAGIR). The Cytoplasmic portion of the chain corresponds to 371 to 388 (IYRIDEKSLDESKNPARK). Residues 389-413 (LDSDLLVGTASGSWLISWGSILAIL) form a helical membrane-spanning segment. Residues 414–423 (CAEGHPRYTW) lie on the Extracellular side of the membrane. The helical transmembrane segment at 424-444 (YNLPYSILAIVEKYIQNLFIF) threads the bilayer. At 445–544 (ESIHREPEKL…QGNAKRKVLR (100 aa)) the chain is on the cytoplasmic side. The tract at residues 499-525 (ANGNVCMRESHDKEEEKQEESSWGGSP) is disordered. The span at 506 to 518 (RESHDKEEEKQEE) shows a compositional bias: basic and acidic residues. A helical membrane pass occupies residues 545–563 (NIAAFLFLCNISLWIPPAF). Residues 564 to 581 (GCRPEYDNGLEEIVFGFE) lie on the Extracellular side of the membrane. The chain crosses the membrane as a helical span at residues 582-605 (PWIIVVNLAMPFSIFYRMHAAASL). The Cytoplasmic segment spans residues 606–612 (FEVYCKI).

It belongs to the otopetrin family. In terms of assembly, homodimer. Interacts with STAT1, independently of STAT1 phosphorylation status.

The protein localises to the cell membrane. It is found in the cell projection. It localises to the microvillus. The catalysed reaction is H(+)(in) = H(+)(out). Its activity is regulated as follows. Activated by both acid and alkali, with proton influx in response to extracellular acid and proton efflux during alkali stimulation. Inhibited by Zn(2+); this inhibition is thought to be pH-sensitive. Currents evoked in response to mild acid (pH 6.0) stimulus may also be mildly potentiated by exposure to Zn(2+). Activated by NH(4)Cl. In terms of biological role, proton-selective ion channel. Biphasically modulated by acid and alkali, mediating proton influx and efflux in response to extracellular acid and base stimulation, respectively. Sour taste receptor, which carries inward currents in response to extracellular acidification. Sensor for ammonium chloride (NH(4)Cl) in taste receptor cells. NH(4)Cl acts by increasing the intracellular pH, thereby generating a driving force for proton entry through OTOP1 channel. Might also participate in alkaline sensation. Plays a role in the regulation of Ca(2+) flux in response to purigenic (ATP, ADP and UDP) stimuli, leading to increase in cytosolic Ca(2+) due to influx of extracellular calcium. May play this role by inhibiting P2Y purinoceptor-mediated Ca(2+) release in a Ca(2+)-dependent manner and promote an influx of Ca(2+) in response to ATP. Through this mechanism and possibly others, plays a role in the formation and function of calcium carbonate-based structures in the vestibular system of the inner ear, called otoconia, that sense gravity and linear acceleration. In obesity, may attenuate adipose tissue inflammation, through the negative regulation of IFNG signaling, hence may play an adaptive role in the maintainance of metabolic homeostasis. Following alkali activation, may also be permeable Na(+), K(+), Cs(+) and Li(+). This chain is Proton channel OTOP1, found in Homo sapiens (Human).